Consider the following 371-residue polypeptide: Gamma-tocopherol methyltransferase, chloroplastic (371 aa).

The transit peptide at 1–65 directs the protein to the chloroplast; sequence MAAAPVFFPS…NSNRIASRLQ (65 aa). The tract at residues 153–162 is SAM motif I; it reads IVDVGCGIGG. Residues 216-224 form an SAM motif II region; the sequence is GQFDLVWSM. The interval 243–252 is SAM motif III; it reads VAAPGATIII.

It belongs to the class I-like SAM-binding methyltransferase superfamily. gTMT family. As to quaternary structure, homodimer.

It is found in the plastid. The protein localises to the chloroplast inner membrane. The catalysed reaction is picrinine + S-adenosyl-L-methionine = ervincine + S-adenosyl-L-homocysteine + H(+). It functions in the pathway alkaloid biosynthesis; vindoline biosynthesis. S-adenosyl-L-methionine-dependent N-methyltransferase involved in the biosynthesis of biologically active monoterpenoid indole alkaloids (MIAs) natural products including vindoline. Inactive with picrinine as substrate. The polypeptide is Gamma-tocopherol methyltransferase, chloroplastic (Catharanthus roseus (Madagascar periwinkle)).